A 917-amino-acid polypeptide reads, in one-letter code: Spermatogenesis-associated protein 31D4 (917 aa).

The chain crosses the membrane as a helical span at residues 29-49 (FICLSGLGLFILYLFYMVLTL). Disordered stretches follow at residues 55–80 (EKNN…KDRK), 152–195 (SVSP…PPPL), and 773–798 (SQET…RSNS). Residues 63–74 (HQGRARRKRKSV) are compositionally biased toward basic residues. Low complexity predominate over residues 152 to 163 (SVSPLASSASGA). Over residues 164–177 (ESSFTLASTPSATT) the composition is skewed to polar residues. The segment covering 782-798 (LLHDPETSSDEDLRSNS) has biased composition (basic and acidic residues).

Belongs to the SPATA31 family.

The protein localises to the membrane. May play a role in spermatogenesis. The polypeptide is Spermatogenesis-associated protein 31D4 (SPATA31D4) (Homo sapiens (Human)).